The chain runs to 114 residues: Large ribosomal subunit protein bL19 (114 aa).

The protein belongs to the bacterial ribosomal protein bL19 family.

Its function is as follows. This protein is located at the 30S-50S ribosomal subunit interface and may play a role in the structure and function of the aminoacyl-tRNA binding site. The protein is Large ribosomal subunit protein bL19 of Clostridium botulinum (strain ATCC 19397 / Type A).